The following is a 633-amino-acid chain: Ankyrin repeat and SOCS box protein 2 (633 aa).

The UIM domain occupies 26–45 (SEDELVQMAIEQSLADKTRG). ANK repeat units follow at residues 102–131 (APVD…NLSE), 135–165 (EGWL…VIDQ), 169–198 (QEET…EPDI), 202–231 (SRET…DTNH), 235–264 (RGWT…KVEA), 268–297 (YGIT…DINT), 301–330 (DSAS…DANK), 334–363 (DGML…RTRV), 366–395 (SGIS…DVNA), 408–437 (RRSS…DPNR), 438–467 (DVIN…NIDA), and 474–502 (TAFP…NGEP). Position 369 is a phosphoserine (S369). In terms of domain architecture, SOCS box spans 579-633 (EDWAVIKEKAEPPRPLAHLCRLRVRKAIGKYRIKLLDTLPLPGRLIRYLKYENTQ).

The protein belongs to the ankyrin SOCS box (ASB) family. In terms of assembly, component of a probable ECS E3 ubiquitin-protein ligase complex which contains CUL5, either RBX1 or RNF7/RBX2, Elongin BC complex (ELOB and ELOC) and ASB2. Interacts with SKP2. Through its interaction with SKP2, likely to bridge the formation of dimeric E3-ubiquitin-protein ligase complexes composed of an ECS complex and an SCF(SKP2) complex. Interacts with JAK2; the interaction targets JAK2 for Notch-mediated proteasomal degradation. Interacts with TCF3/E2A; the interaction is mediated by SKP2 and targets TCF3 for Notch-mediated proteasomal degradation. Interacts with DES. In terms of processing, monoubiquitinated.

It is found in the cytoplasm. Its subcellular location is the cytoskeleton. The protein localises to the stress fiber. It localises to the myofibril. The protein resides in the sarcomere. It is found in the z line. It participates in protein modification; protein ubiquitination. Its function is as follows. Substrate-recognition component of a SCF-like ECS (Elongin-Cullin-SOCS-box protein) E3 ubiquitin-protein ligase complex which mediates the ubiquitination and subsequent proteasomal degradation of target proteins. Mediates Notch-induced ubiquitination and degradation of substrates including E2A and JAK2. Required during embryonic heart development for complete heart looping. Required for cardiomyocyte differentiation. Involved in myogenic differentiation and targets filamin FLNB for proteasomal degradation but not filamin FLNA. Also targets DES for proteasomal degradation. Acts as a negative regulator of skeletal muscle mass. This is Ankyrin repeat and SOCS box protein 2 from Bos taurus (Bovine).